Consider the following 641-residue polypeptide: MAEEAVPSESRAAGRPSLELCAVALPGRREEVGHQDTAGHRRPRAHSRCWARGLLLLLWLLEAPLLLGVRAQPAGQVSGPGQQRPPPPQPQQGGQQYNGERGISIPDHGYCQPISIPLCTDIAYNQTIMPNLLGHTNQEDAGLEVHQFYPLVKVQCSAELKFFLCSMYAPVCTVLEQALPPCRSLCERAQGCEALMNKFGFQWPDTLKCEKFPVHGAGELCVGQNTSDKGTPTPSLLPEFWTSNPQHGGGGYRGGYPGGAGPVERGKFSCPRALRVPSYLNYHFLGEKDCGAPCEPTKVYGLMYFGPEELRFSRTWIGIWSVLCCASTLFTVLTYLVDMRRFSYPERPIIFLSGCYTAVAVAYIAGFLLEDRVVCNDKFAEDGARTVAQGTKKEGCTILFMMLYFFSMASSIWWVILSLTWFLAAGMKWGHEAIEANSQYFHLAAWAVPAIKTITILALGQVDGDVLSGVCFVGLNNVDALRGFVLAPLFVYLFIGTSFLLAGFVSLFRIRTIMKHDGTKTEKLEKLMVRIGVFSVLYTVPATIVIACYFYEQAFRDQWERSWVAQSCKSYAIPCPHLQGGGGVPPHPPMSPDFTVFMIKYLMTLIVGITSGFWIWSGKTLNSWRKFYTRLTNSKQGETTV.

A signal peptide spans 1–68 (MAEEAVPSES…WLLEAPLLLG (68 aa)). The Extracellular segment spans residues 69–316 (VRAQPAGQVS…PEELRFSRTW (248 aa)). Positions 74 to 99 (AGQVSGPGQQRPPPPQPQQGGQQYNG) are disordered. The FZ domain occupies 106-224 (PDHGYCQPIS…HGAGELCVGQ (119 aa)). Intrachain disulfides connect Cys-111–Cys-172, Cys-119–Cys-165, Cys-156–Cys-192, Cys-182–Cys-221, and Cys-186–Cys-209. Asn-125 carries an N-linked (GlcNAc...) asparagine glycan. An N-linked (GlcNAc...) asparagine glycan is attached at Asn-225. The helical transmembrane segment at 317 to 337 (IGIWSVLCCASTLFTVLTYLV) threads the bilayer. Over 338–348 (DMRRFSYPERP) the chain is Cytoplasmic. Residues 349–369 (IIFLSGCYTAVAVAYIAGFLL) traverse the membrane as a helical segment. At 370–396 (EDRVVCNDKFAEDGARTVAQGTKKEGC) the chain is on the extracellular side. The helical transmembrane segment at 397-417 (TILFMMLYFFSMASSIWWVIL) threads the bilayer. Topologically, residues 418–439 (SLTWFLAAGMKWGHEAIEANSQ) are cytoplasmic. The helical transmembrane segment at 440–460 (YFHLAAWAVPAIKTITILALG) threads the bilayer. At 461–483 (QVDGDVLSGVCFVGLNNVDALRG) the chain is on the extracellular side. The helical transmembrane segment at 484–504 (FVLAPLFVYLFIGTSFLLAGF) threads the bilayer. Topologically, residues 505 to 530 (VSLFRIRTIMKHDGTKTEKLEKLMVR) are cytoplasmic. The chain crosses the membrane as a helical span at residues 531–551 (IGVFSVLYTVPATIVIACYFY). At 552–595 (EQAFRDQWERSWVAQSCKSYAIPCPHLQGGGGVPPHPPMSPDFT) the chain is on the extracellular side. A helical membrane pass occupies residues 596–616 (VFMIKYLMTLIVGITSGFWIW). Residues 617 to 641 (SGKTLNSWRKFYTRLTNSKQGETTV) lie on the Cytoplasmic side of the membrane. The Lys-Thr-X-X-X-Trp motif, mediates interaction with the PDZ domain of Dvl family members motif lies at 619-624 (KTLNSW). Residues 639-641 (TTV) carry the PDZ-binding motif.

Belongs to the G-protein coupled receptor Fz/Smo family. As to quaternary structure, interacts with MYOC. Interacts with WNT7B. In terms of processing, ubiquitinated by ZNRF3, leading to its degradation by the proteasome. Widely expressed. Most abundant in kidney, liver, uterus, ovary and heart. Lower levels seen in brain and intestine. Extremely low in calvaria, mammary glands and testis.

The protein resides in the cell membrane. Functionally, receptor for Wnt proteins. Activated by WNT3A, WNT3, WNT1 and to a lesser extent WNT2, but apparently not by WNT4, WNT5A, WNT5B, WNT6 or WNT7A. Contradictory results have been reported for activation by WNT7B. Functions in the canonical Wnt/beta-catenin signaling pathway. The canonical Wnt/beta-catenin signaling pathway leads to the activation of disheveled proteins, inhibition of GSK-3 kinase, nuclear accumulation of beta-catenin and activation of Wnt target genes. A second signaling pathway involving PKC and calcium fluxes has been seen for some family members, but it is not yet clear if it represents a distinct pathway or if it can be integrated in the canonical pathway, as PKC seems to be required for Wnt-mediated inactivation of GSK-3 kinase. Both pathways seem to involve interactions with G-proteins. May be involved in transduction and intercellular transmission of polarity information during tissue morphogenesis and/or in differentiated tissues. The polypeptide is Frizzled-1 (Fzd1) (Rattus norvegicus (Rat)).